The sequence spans 844 residues: Janus kinase and microtubule-interacting protein 3 (844 aa).

Residues serine 8–histidine 259 adopt a coiled-coil conformation. The disordered stretch occupies residues glutamine 249–lysine 290. Basic and acidic residues predominate over residues lysine 254–leucine 267. Residues alanine 270–serine 282 show a composition bias toward low complexity. A coiled-coil region spans residues glutamate 289–alanine 421. Position 384 is a phosphoserine (serine 384). Polar residues predominate over residues serine 466–cysteine 483. The segment at serine 466–aspartate 488 is disordered. 2 coiled-coil regions span residues methionine 493–lysine 621 and glutamate 688–phenylalanine 833.

The protein belongs to the JAKMIP family.

It localises to the golgi apparatus. The sequence is that of Janus kinase and microtubule-interacting protein 3 (Jakmip3) from Mus musculus (Mouse).